We begin with the raw amino-acid sequence, 435 residues long: Arginine/serine-rich coiled-coil protein 2 (435 aa).

Positions 1–27 (MAASDTERDGLAPEKTSPDRDKKKEQS) are enriched in basic and acidic residues. Residues 1-230 (MAASDTERDG…PSPPPFRGRN (230 aa)) form a disordered region. The residue at position 2 (A2) is an N-acetylalanine. A Phosphoserine modification is found at S4. Phosphothreonine occurs at positions 6 and 16. Residues S17, S30, and S32 each carry the phosphoserine modification. A compositionally biased stretch (basic residues) spans 35–51 (ASKHHYSRSRSRSRERK). Basic and acidic residues predominate over residues 66–111 (RSKEARRHESKDKSSKKHKSEEHNDKEHSSDKGRERLNSSENGEDR). At S104 the chain carries Phosphoserine. Basic residues predominate over residues 112–214 (HKRKERKSSR…KRIEKPRRFS (103 aa)). Positions 230-270 (NTAMDAQEALARRLERAKKLQEQREKEMVEKQKQQEIAAAA) form a coiled coil. A Glycyl lysine isopeptide (Lys-Gly) (interchain with G-Cter in SUMO1); alternate cross-link involves residue K376. A Glycyl lysine isopeptide (Lys-Gly) (interchain with G-Cter in SUMO2); alternate cross-link involves residue K376. At S377 the chain carries Phosphoserine.

The protein belongs to the RSRC2 family.

The polypeptide is Arginine/serine-rich coiled-coil protein 2 (RSRC2) (Pongo abelii (Sumatran orangutan)).